Here is a 433-residue protein sequence, read N- to C-terminus: Glutamate-1-semialdehyde 2,1-aminomutase (433 aa).

N6-(pyridoxal phosphate)lysine is present on lysine 273.

It belongs to the class-III pyridoxal-phosphate-dependent aminotransferase family. HemL subfamily. As to quaternary structure, homodimer. Pyridoxal 5'-phosphate serves as cofactor.

The protein resides in the cytoplasm. The catalysed reaction is (S)-4-amino-5-oxopentanoate = 5-aminolevulinate. The protein operates within porphyrin-containing compound metabolism; protoporphyrin-IX biosynthesis; 5-aminolevulinate from L-glutamyl-tRNA(Glu): step 2/2. The polypeptide is Glutamate-1-semialdehyde 2,1-aminomutase (Polynucleobacter necessarius subsp. necessarius (strain STIR1)).